A 356-amino-acid chain; its full sequence is (+)-(1(10)E,4E,6S,7R)-germacradien-6-ol synthase (356 aa).

Mg(2+)-binding residues include Asp-86 and Asp-91. The short motif at 86 to 91 is the DDXXXD motif element; that stretch reads DDEYCD. Arg-181 contacts substrate. Residues Asn-227 and Ser-231 each contribute to the Mg(2+) site. Lys-234 contributes to the substrate binding site. Residue Glu-235 participates in Mg(2+) binding. 314-315 lines the substrate pocket; sequence RY.

The protein belongs to the terpene synthase family. The cofactor is Mg(2+).

It carries out the reaction (2E,6E)-farnesyl diphosphate + H2O = (+)-(1(10)E,4E,6S,7R)-germacradien-6-ol + diphosphate. It participates in secondary metabolite biosynthesis; terpenoid biosynthesis. Its function is as follows. Catalyzes the conversion of (2E,6E)-farnesyl diphosphate (FPP) to yield the sesquiterpene (+)-(1(10)E,4E,6S,7R)-germacradien-6-ol via a putative 1,10-cyclization, which could require the abstraction of the pyrophosphate from FPP to yield the (E,E)-germacradienyl cation. The only accepted substrate is farnesyl diphosphate (FPP). This is (+)-(1(10)E,4E,6S,7R)-germacradien-6-ol synthase from Streptomyces pratensis (strain ATCC 33331 / IAF-45CD).